A 556-amino-acid polypeptide reads, in one-letter code: Undecaprenyl phosphate-alpha-4-amino-4-deoxy-L-arabinose arabinosyl transferase (556 aa).

10 helical membrane passes run 88–108, 116–136, 179–199, 207–227, 258–278, 296–316, 319–339, 355–375, 384–404, and 410–430; these read FASV…AMML, LLAA…TYSV, FMTK…PVAL, LLLF…PWAL, APFW…LALL, FFLL…KGKL, YILP…SGLA, IVFG…IIVP, LTII…AVSL, and WGYL…GSIP.

This sequence belongs to the glycosyltransferase 83 family.

It localises to the cell inner membrane. The enzyme catalyses 4-amino-4-deoxy-alpha-L-arabinopyranosyl di-trans,octa-cis-undecaprenyl phosphate + lipid IVA = lipid IIA + di-trans,octa-cis-undecaprenyl phosphate.. It functions in the pathway lipopolysaccharide metabolism; 4-amino-4-deoxy-beta-L-arabinose-lipid A biosynthesis. Catalyzes the transfer of the L-Ara4N moiety of the glycolipid undecaprenyl phosphate-alpha-L-Ara4N to lipid A. The modified arabinose is attached to lipid A and is required for resistance to polymyxin and cationic antimicrobial peptides. This is Undecaprenyl phosphate-alpha-4-amino-4-deoxy-L-arabinose arabinosyl transferase from Pectobacterium atrosepticum (strain SCRI 1043 / ATCC BAA-672) (Erwinia carotovora subsp. atroseptica).